We begin with the raw amino-acid sequence, 276 residues long: Palmitoyltransferase ZDHHC22 (276 aa).

Over 1–9 (MGKLKLLNT) the chain is Cytoplasmic. The helical transmembrane segment at 10 to 30 (IAPAYFYAATVVTFALHFLLF) threads the bilayer. Residues 31–45 (TPTIFQSSDVTINPA) are Lumenal-facing. Residues 46–66 (MLAHISIFLFLMGNALGNYIM) form a helical membrane-spanning segment. Topologically, residues 67–131 (TIRNPSESAN…NCIGNRNMRY (65 aa)) are cytoplasmic. One can recognise a DHHC domain in the interval 101–137 (HFCKVCKKVILKRDHHCFFTGNCIGNRNMRYFIMFSI). Catalysis depends on cysteine 117, which acts as the S-palmitoyl cysteine intermediate. A helical transmembrane segment spans residues 132-152 (FIMFSIYTSSSCLYSLVIGVA). At 153–165 (YLTIEYSISFENP) the chain is on the lumenal side. A helical membrane pass occupies residues 166 to 186 (LTFLTLLPLSTGYFFLGLISG). Residues 187–188 (LQ) lie on the Cytoplasmic side of the membrane. The helical transmembrane segment at 189-209 (FFLVIMLYIWLGIGLVSVGFC) threads the bilayer. At 210-276 (CQQLLLVARG…WQVYHDHKHD (67 aa)) the chain is on the lumenal side.

Belongs to the DHHC palmitoyltransferase family.

Its subcellular location is the endoplasmic reticulum membrane. The protein localises to the golgi apparatus membrane. The catalysed reaction is L-cysteinyl-[protein] + hexadecanoyl-CoA = S-hexadecanoyl-L-cysteinyl-[protein] + CoA. In terms of biological role, palmitoyltransferase that could catalyze the addition of palmitate onto various protein substrates and be involved in a variety of cellular processes. The protein is Palmitoyltransferase ZDHHC22 (zdhhc22) of Danio rerio (Zebrafish).